A 142-amino-acid chain; its full sequence is Putative tyrosine phosphatase 123R (142 aa).

The region spanning 2–137 is the Tyrosine-protein phosphatase domain; it reads EPTKIVENLY…LAQFERWLNS (136 aa). The Phosphocysteine intermediate role is filled by Cys-81.

The protein belongs to the protein-tyrosine phosphatase family.

The protein is Putative tyrosine phosphatase 123R of Invertebrate iridescent virus 6 (IIV-6).